We begin with the raw amino-acid sequence, 201 residues long: MKTYRDHYFLKAKQENYPARSIYKLKEIDNRFKLFRQGMKVLDLGAAPGSWSLGAAERVGPKGRVLACDLQTTDTQFPPNVTFMQEDVFNRSEAFEDALAAMGPFHVVISDMAPRTTGTRFTDQARSLELCIEALAVADHCLIKGGSFVVKIFMGPDVKQLLDALRARFETVKTFKPKSSRVESKETFYVCLGYRGDGQQD.

Positions 49, 51, 69, 87, and 111 each coordinate S-adenosyl-L-methionine. The active-site Proton acceptor is the Lys151.

Belongs to the class I-like SAM-binding methyltransferase superfamily. RNA methyltransferase RlmE family.

The protein localises to the cytoplasm. It catalyses the reaction uridine(2552) in 23S rRNA + S-adenosyl-L-methionine = 2'-O-methyluridine(2552) in 23S rRNA + S-adenosyl-L-homocysteine + H(+). Its function is as follows. Specifically methylates the uridine in position 2552 of 23S rRNA at the 2'-O position of the ribose in the fully assembled 50S ribosomal subunit. The sequence is that of Ribosomal RNA large subunit methyltransferase E from Nitratidesulfovibrio vulgaris (strain DSM 19637 / Miyazaki F) (Desulfovibrio vulgaris).